We begin with the raw amino-acid sequence, 554 residues long: MGAQVIAAASNGLCHDDEPIASVKSRITRSGRKLWYSLRVVQEPLRARACGSGPKSSADRRPVDPPPVVELRIFEGESFEMAQERDVTFQYNANFFLYATLEHARVMAQGRLQTPSANTPPVLTGMPVSGMAYLDRPKLAGYFLFPDLSVRHEGRYKLTFNLYEETKEDKDKDPEEPNAPPDGSPGSFDFRMDIKSHDFVVYSAKKFPGLTESTPLSRTVAEQGCRVRIRRDVRMRRRDGKGNSGGNDYENGEEEYRRARRTATPDTAKQEAYRQRSMSGSTERTPYSSISDPQRRPSMADYPPQYAAQTPTSGGHLGFLGGNTHHQYPAQPPPQSFAQPHSVPPSPVYPTSQRAPYQHQPSSYPPPPPPHQPIFQSEHHTSRTYAPINPASRHDSIHQSTKQYTLPPLSEAVSPTQPHHQHPSIAPHRLPVTALPPLQVDRFSSASHNQHPMVSPSNMAAPPYPRAYSVSNSGGLTSAGGYNQLPPPPPPPPQVAGSKRAHDQTFRADPEMRRYQDGARERESVDDKEPPLCTFKYRRADGSVECKQADIGGY.

Residues 31–230 (GRKLWYSLRV…AEQGCRVRIR (200 aa)) form the Velvet domain. The Nuclear localization signal motif lies at 45-50 (LRARAC). Residues 166–175 (TKEDKDKDPE) show a composition bias toward basic and acidic residues. 3 disordered regions span residues 166-190 (TKED…SFDF), 232-430 (DVRM…PHRL), and 465-528 (PRAY…VDDK). Positions 276–292 (RSMSGSTERTPYSSISD) are enriched in polar residues. Composition is skewed to pro residues over residues 363–372 (SYPPPPPPHQ) and 485–494 (LPPPPPPPPQ). Residues 455–487 (SPSNMAAPPYPRAYSVSNSGGLTSAGGYNQLPP) form a PEST region. Basic and acidic residues predominate over residues 500–528 (RAHDQTFRADPEMRRYQDGARERESVDDK).

Belongs to the velvet family. VeA subfamily. As to quaternary structure, component of the heterotrimeric velvet complex composed of lae-1, ve-1 and vel-2; Ve-1 acting as a bridging protein between lae-1 and vel-2.

The protein resides in the nucleus. Its subcellular location is the cytoplasm. Its function is as follows. Component of the velvet transcription factor complex that controls sexual/asexual developmental ratio in response to light, promoting sexual development in the darkness while stimulating asexual sporulation under illumination. The velvet complex hat acts as a global regulator for secondary metabolite gene expression. This is Developmental and secondary metabolism regulator ve-1 from Neurospora crassa (strain ATCC 24698 / 74-OR23-1A / CBS 708.71 / DSM 1257 / FGSC 987).